We begin with the raw amino-acid sequence, 60 residues long: MAVPKRKMSRANTRHRRSQWKASAPTLVQCSNRACREPKLPHVACPSCGQYDGRQIHEPA.

Residues 1 to 19 (MAVPKRKMSRANTRHRRSQ) are compositionally biased toward basic residues. The interval 1–20 (MAVPKRKMSRANTRHRRSQW) is disordered.

Belongs to the bacterial ribosomal protein bL32 family.

In Saccharopolyspora erythraea (strain ATCC 11635 / DSM 40517 / JCM 4748 / NBRC 13426 / NCIMB 8594 / NRRL 2338), this protein is Large ribosomal subunit protein bL32B.